The following is a 235-amino-acid chain: Small ribosomal subunit protein eS4 (235 aa).

The 62-residue stretch at 38–99 (VTLLTIIRDY…GESYRVVYNN (62 aa)) folds into the S4 RNA-binding domain.

The protein belongs to the eukaryotic ribosomal protein eS4 family.

This chain is Small ribosomal subunit protein eS4 (rps4e), found in Thermoplasma volcanium (strain ATCC 51530 / DSM 4299 / JCM 9571 / NBRC 15438 / GSS1).